A 689-amino-acid chain; its full sequence is Glycine--tRNA ligase beta subunit (689 aa).

This sequence belongs to the class-II aminoacyl-tRNA synthetase family. As to quaternary structure, tetramer of two alpha and two beta subunits.

Its subcellular location is the cytoplasm. The catalysed reaction is tRNA(Gly) + glycine + ATP = glycyl-tRNA(Gly) + AMP + diphosphate. This is Glycine--tRNA ligase beta subunit from Shewanella putrefaciens (strain CN-32 / ATCC BAA-453).